The following is a 109-amino-acid chain: C-X-C motif chemokine 13 (109 aa).

The N-terminal stretch at 1–22 (MKFISTSLLLMLLVSSLSPVQG) is a signal peptide. 2 disulfide bridges follow: Cys-33-Cys-60 and Cys-35-Cys-76.

It belongs to the intercrine alpha (chemokine CxC) family. Highest levels in liver, followed by spleen, lymph node, appendix and stomach. Low levels in salivary gland, mammary gland and fetal spleen.

The protein resides in the secreted. In terms of biological role, chemotactic for B-lymphocytes but not for T-lymphocytes, monocytes and neutrophils. Does not induce calcium release in B-lymphocytes. Binds to BLR1/CXCR5. The sequence is that of C-X-C motif chemokine 13 (CXCL13) from Homo sapiens (Human).